A 434-amino-acid chain; its full sequence is Glutamate/glutamine/aspartate/asparagine transport system permease protein BztC (434 aa).

A run of 10 helical transmembrane segments spans residues 41 to 61 (LTVF…PWLL), 113 to 133 (LFVT…DALP), 135 to 155 (KLIW…WGGP), 156 to 176 (IWGP…FTAL), 180 to 200 (LGVP…WLYA), 227 to 247 (FLLA…LGIL), 272 to 292 (GVPL…FLPP), 298 to 318 (LILR…AEVI), 360 to 380 (IVSS…VGLF), and 398 to 418 (GTYW…NFSM). The ABC transmembrane type-1 domain maps to 227–422 (FLLALVIGVT…LFNFSMSRYS (196 aa)).

This sequence belongs to the binding-protein-dependent transport system permease family. HisMQ subfamily. As to quaternary structure, bztB and BztC form a heterodimer which can form a membrane complex with a homodimer of BztD.

The protein localises to the cell inner membrane. Part of a binding-protein-dependent transport system for glutamate, glutamine, aspartate and asparagine. Probably responsible for the translocation of the substrate across the membrane. The protein is Glutamate/glutamine/aspartate/asparagine transport system permease protein BztC (bztC) of Rhodobacter capsulatus (strain ATCC BAA-309 / NBRC 16581 / SB1003).